Reading from the N-terminus, the 273-residue chain is NADPH-dependent 7-cyano-7-deazaguanine reductase (273 aa).

81–83 (VES) contributes to the substrate binding site. 83 to 84 (SK) serves as a coordination point for NADPH. C179 functions as the Thioimide intermediate in the catalytic mechanism. The active-site Proton donor is D186. 218 to 219 (AE) contributes to the substrate binding site. 247-248 (RG) contacts NADPH.

Belongs to the GTP cyclohydrolase I family. QueF type 2 subfamily. Homodimer.

Its subcellular location is the cytoplasm. It carries out the reaction 7-aminomethyl-7-carbaguanine + 2 NADP(+) = 7-cyano-7-deazaguanine + 2 NADPH + 3 H(+). It functions in the pathway tRNA modification; tRNA-queuosine biosynthesis. Functionally, catalyzes the NADPH-dependent reduction of 7-cyano-7-deazaguanine (preQ0) to 7-aminomethyl-7-deazaguanine (preQ1). The polypeptide is NADPH-dependent 7-cyano-7-deazaguanine reductase (Rickettsia bellii (strain OSU 85-389)).